A 432-amino-acid polypeptide reads, in one-letter code: Phosphomethylpyrimidine synthase (432 aa).

Residues asparagine 66, methionine 95, tyrosine 124, histidine 163, 185-187 (SRG), 226-229 (DGLR), and glutamate 265 contribute to the substrate site. Histidine 269 serves as a coordination point for Zn(2+). Residue tyrosine 292 participates in substrate binding. Zn(2+) is bound at residue histidine 333. 3 residues coordinate [4Fe-4S] cluster: cysteine 409, cysteine 412, and cysteine 416.

It belongs to the ThiC family. It depends on [4Fe-4S] cluster as a cofactor.

It catalyses the reaction 5-amino-1-(5-phospho-beta-D-ribosyl)imidazole + S-adenosyl-L-methionine = 4-amino-2-methyl-5-(phosphooxymethyl)pyrimidine + CO + 5'-deoxyadenosine + formate + L-methionine + 3 H(+). The protein operates within cofactor biosynthesis; thiamine diphosphate biosynthesis. In terms of biological role, catalyzes the synthesis of the hydroxymethylpyrimidine phosphate (HMP-P) moiety of thiamine from aminoimidazole ribotide (AIR) in a radical S-adenosyl-L-methionine (SAM)-dependent reaction. This Desulforamulus reducens (strain ATCC BAA-1160 / DSM 100696 / MI-1) (Desulfotomaculum reducens) protein is Phosphomethylpyrimidine synthase.